A 234-amino-acid polypeptide reads, in one-letter code: MLTRKQHELLMFIHERIKETGVSPSFDEMKEALDLASKSGIHRLITALEERGFIRRLAHRARALEVVKLPQQATAAAPPKGRGAFRPQVFEGGGAPPPAASPAAAANDSRELPILGRIAAGTPIDAIQHERERLPVPEAMLGAGEHYVLEVQGDSMIEAGILDGDYVIIKKGDTATSGEIVVALVGEEATLKRLRKKGGSIALEAANPKYETRIFGPDQVEVQGKLVGLIRRYH.

The segment at residues phenylalanine 26–threonine 46 is a DNA-binding region (H-T-H motif). The disordered stretch occupies residues alanine 73–asparagine 107. Active-site for autocatalytic cleavage activity residues include serine 155 and lysine 192.

It belongs to the peptidase S24 family. Homodimer.

The catalysed reaction is Hydrolysis of Ala-|-Gly bond in repressor LexA.. Its function is as follows. Represses a number of genes involved in the response to DNA damage (SOS response), including recA and lexA. In the presence of single-stranded DNA, RecA interacts with LexA causing an autocatalytic cleavage which disrupts the DNA-binding part of LexA, leading to derepression of the SOS regulon and eventually DNA repair. This chain is LexA repressor, found in Caulobacter vibrioides (strain ATCC 19089 / CIP 103742 / CB 15) (Caulobacter crescentus).